The chain runs to 828 residues: Conserved oligomeric Golgi complex subunit 3 (828 aa).

Ala-2 carries the N-acetylalanine modification. The tract at residues 504 to 543 (DEQKKVPSEASFSDVHLEEGESNSLTKSGSTESLNPRPQT) is disordered. Over residues 525–543 (SNSLTKSGSTESLNPRPQT) the composition is skewed to polar residues. Ser-663 is modified (phosphoserine).

The protein belongs to the COG3 family. As to quaternary structure, component of the conserved oligomeric Golgi complex which is composed of eight different subunits and is required for normal Golgi morphology and localization. Interacts with TMEM115. In terms of tissue distribution, widely expressed with highest levels in pancreas and testis and lowest levels in lung.

The protein localises to the golgi apparatus. The protein resides in the golgi stack membrane. Functionally, involved in ER-Golgi transport. Also involved in retrograde (Golgi to ER) transport. The polypeptide is Conserved oligomeric Golgi complex subunit 3 (COG3) (Homo sapiens (Human)).